A 1255-amino-acid chain; its full sequence is RNA-directed RNA polymerase (1255 aa).

Residues 548–756 (LIPLGLSPYA…QQRVSCGTFV (209 aa)) enclose the RdRp catalytic domain.

The protein resides in the virion. It carries out the reaction RNA(n) + a ribonucleoside 5'-triphosphate = RNA(n+1) + diphosphate. RNA-directed RNA polymerase that is involved in transcription and genome replication. Following infection, it catalyzes the synthesis of fully conservative plus strands. After core assembly, which consists in recruitment of one capped plus-strand for each genomic segments and polymerase complexes, the polymerase switches mode and catalyzes the synthesis of complementary minus-strands. This is RNA-directed RNA polymerase from Oryza latifolia (Indian wild rice).